A 431-amino-acid polypeptide reads, in one-letter code: Tol-Pal system protein TolB (431 aa).

Residues 1 to 26 (MSLMTKLGFRALVASCLIAAGSAANA) form the signal peptide. The segment at 411 to 431 (PQILSVQGGSVREPSWGPFMQ) is disordered.

Belongs to the TolB family. In terms of assembly, the Tol-Pal system is composed of five core proteins: the inner membrane proteins TolA, TolQ and TolR, the periplasmic protein TolB and the outer membrane protein Pal. They form a network linking the inner and outer membranes and the peptidoglycan layer.

It is found in the periplasm. Part of the Tol-Pal system, which plays a role in outer membrane invagination during cell division and is important for maintaining outer membrane integrity. The protein is Tol-Pal system protein TolB of Burkholderia multivorans (strain ATCC 17616 / 249).